The following is a 299-amino-acid chain: Small ribosomal subunit biogenesis GTPase RsgA (299 aa).

In terms of domain architecture, CP-type G spans 73–232; that stretch reads CSWLTRPQVA…VADTPGFNRP (160 aa). GTP contacts are provided by residues 122 to 125 and 174 to 182; these read TKGD and GPSGVGKSS. Residues cysteine 257, cysteine 262, histidine 264, and cysteine 270 each contribute to the Zn(2+) site.

This sequence belongs to the TRAFAC class YlqF/YawG GTPase family. RsgA subfamily. In terms of assembly, monomer. Associates with 30S ribosomal subunit, binds 16S rRNA. The cofactor is Zn(2+).

Its subcellular location is the cytoplasm. One of several proteins that assist in the late maturation steps of the functional core of the 30S ribosomal subunit. Helps release RbfA from mature subunits. May play a role in the assembly of ribosomal proteins into the subunit. Circularly permuted GTPase that catalyzes slow GTP hydrolysis, GTPase activity is stimulated by the 30S ribosomal subunit. The sequence is that of Small ribosomal subunit biogenesis GTPase RsgA from Parasynechococcus marenigrum (strain WH8102).